A 351-amino-acid polypeptide reads, in one-letter code: Prostaglandin reductase 2 (351 aa).

99 to 100 (FY) is a binding site for substrate. Residues 165–168 (GACG), lysine 192, tyrosine 208, asparagine 231, 253–259 (CGQISQY), 287–289 (FLV), and asparagine 337 each bind NADP(+). 288-290 (LVL) is a binding site for substrate.

The protein belongs to the NADP-dependent oxidoreductase L4BD family. As to quaternary structure, monomer.

The protein localises to the cytoplasm. The enzyme catalyses 13,14-dihydro-15-oxo-prostaglandin E2 + NAD(+) = 15-oxoprostaglandin E2 + NADH + H(+). It catalyses the reaction 13,14-dihydro-15-oxo-prostaglandin E2 + NADP(+) = 15-oxoprostaglandin E2 + NADPH + H(+). It carries out the reaction 13,14-dihydro-15-oxo-PGF2alpha + NADP(+) = 15-oxoprostaglandin F2alpha + NADPH + H(+). The catalysed reaction is 13,14-dihydro-15-oxo-prostaglandin E1 + NADP(+) = 15-oxoprostaglandin E1 + NADPH + H(+). The enzyme catalyses 13,14-dihydro-15-oxo-prostaglandin F1alpha + NADP(+) = 15-oxoprostaglandin F1alpha + NADPH + H(+). Its function is as follows. Functions as 15-oxo-prostaglandin 13-reductase and acts on 15-keto-PGE1, 15-keto-PGE2, 15-keto-PGE1-alpha and 15-keto-PGE2-alpha with highest activity towards 15-keto-PGE2. Overexpression represses transcriptional activity of PPARG and inhibits adipocyte differentiation. This chain is Prostaglandin reductase 2 (PTGR2), found in Pongo abelii (Sumatran orangutan).